The primary structure comprises 92 residues: Small ribosomal subunit protein uS19c (92 aa).

The disordered stretch occupies residues 73–92; it reads EFSPTRTYRGHAKKDKKAKR. The segment covering 80-92 has biased composition (basic residues); the sequence is YRGHAKKDKKAKR.

This sequence belongs to the universal ribosomal protein uS19 family.

The protein localises to the plastid. It localises to the chloroplast. Its function is as follows. Protein S19 forms a complex with S13 that binds strongly to the 16S ribosomal RNA. This is Small ribosomal subunit protein uS19c (rps19) from Chlamydomonas reinhardtii (Chlamydomonas smithii).